Consider the following 431-residue polypeptide: Glutamyl-tRNA(Gln) amidotransferase subunit A (431 aa).

Catalysis depends on charge relay system residues Lys-55 and Ser-130. Ser-154 acts as the Acyl-ester intermediate in catalysis.

Belongs to the amidase family. GatA subfamily. As to quaternary structure, heterotrimer of A, B and C subunits.

It catalyses the reaction L-glutamyl-tRNA(Gln) + L-glutamine + ATP + H2O = L-glutaminyl-tRNA(Gln) + L-glutamate + ADP + phosphate + H(+). Allows the formation of correctly charged Gln-tRNA(Gln) through the transamidation of misacylated Glu-tRNA(Gln) in organisms which lack glutaminyl-tRNA synthetase. The reaction takes place in the presence of glutamine and ATP through an activated gamma-phospho-Glu-tRNA(Gln). The sequence is that of Glutamyl-tRNA(Gln) amidotransferase subunit A from Methanococcus maripaludis (strain DSM 14266 / JCM 13030 / NBRC 101832 / S2 / LL).